A 183-amino-acid chain; its full sequence is Probable chemoreceptor glutamine deamidase CheD (183 aa).

Belongs to the CheD family.

It carries out the reaction L-glutaminyl-[protein] + H2O = L-glutamyl-[protein] + NH4(+). Probably deamidates glutamine residues to glutamate on methyl-accepting chemotaxis receptors (MCPs), playing an important role in chemotaxis. The sequence is that of Probable chemoreceptor glutamine deamidase CheD from Rhizobium meliloti (strain 1021) (Ensifer meliloti).